The sequence spans 482 residues: tRNA sulfurtransferase (482 aa).

The region spanning 61–165 (VQICDALTRI…QDVLILVKAR (105 aa)) is the THUMP domain. ATP is bound by residues 183–184 (LI), lysine 265, glycine 287, and glutamine 296. The cysteines at positions 344 and 456 are disulfide-linked. The Rhodanese domain maps to 404–482 (FAPTDVLLDI…GFDNVKVYRP (79 aa)). Catalysis depends on cysteine 456, which acts as the Cysteine persulfide intermediate.

It belongs to the ThiI family.

Its subcellular location is the cytoplasm. It carries out the reaction [ThiI sulfur-carrier protein]-S-sulfanyl-L-cysteine + a uridine in tRNA + 2 reduced [2Fe-2S]-[ferredoxin] + ATP + H(+) = [ThiI sulfur-carrier protein]-L-cysteine + a 4-thiouridine in tRNA + 2 oxidized [2Fe-2S]-[ferredoxin] + AMP + diphosphate. The enzyme catalyses [ThiS sulfur-carrier protein]-C-terminal Gly-Gly-AMP + S-sulfanyl-L-cysteinyl-[cysteine desulfurase] + AH2 = [ThiS sulfur-carrier protein]-C-terminal-Gly-aminoethanethioate + L-cysteinyl-[cysteine desulfurase] + A + AMP + 2 H(+). It functions in the pathway cofactor biosynthesis; thiamine diphosphate biosynthesis. Its function is as follows. Catalyzes the ATP-dependent transfer of a sulfur to tRNA to produce 4-thiouridine in position 8 of tRNAs, which functions as a near-UV photosensor. Also catalyzes the transfer of sulfur to the sulfur carrier protein ThiS, forming ThiS-thiocarboxylate. This is a step in the synthesis of thiazole, in the thiamine biosynthesis pathway. The sulfur is donated as persulfide by IscS. This chain is tRNA sulfurtransferase, found in Photorhabdus laumondii subsp. laumondii (strain DSM 15139 / CIP 105565 / TT01) (Photorhabdus luminescens subsp. laumondii).